Here is a 97-residue protein sequence, read N- to C-terminus: Ferredoxin-like protein (97 aa).

Positions 56-86 constitute a 4Fe-4S ferredoxin-type domain; sequence GQVEVIADGCMECGTCRVLCEESGDIDWSYP.

To ferredoxins from P.putida and C.tartarivorum, ferredoxin I from A.vinelandii, ferredoxin II from D.desulfuricans.

Functionally, could be a 3Fe-4S cluster-containing protein. This is Ferredoxin-like protein (fixX) from Sinorhizobium fredii (strain NBRC 101917 / NGR234).